The primary structure comprises 320 residues: Heptaprenyl diphosphate synthase component 2 (320 aa).

Isopentenyl diphosphate is bound by residues K45, R48, and H77. D84 and D88 together coordinate Mg(2+). R93 contacts all-trans-hexaprenyl diphosphate. R94 contributes to the isopentenyl diphosphate binding site. Residues K170, T171, and Q208 each coordinate all-trans-hexaprenyl diphosphate.

This sequence belongs to the FPP/GGPP synthase family. As to quaternary structure, heterodimer of component I and II. Mg(2+) is required as a cofactor.

The enzyme catalyses 4 isopentenyl diphosphate + (2E,6E)-farnesyl diphosphate = all-trans-heptaprenyl diphosphate + 4 diphosphate. Supplies heptaprenyl diphosphate, the precursor for the side chain of the isoprenoid quinone menaquinone-7 (MQ-7). The polypeptide is Heptaprenyl diphosphate synthase component 2 (hepT) (Geobacillus stearothermophilus (Bacillus stearothermophilus)).